The sequence spans 344 residues: Trace amine-associated receptor 8b (344 aa).

Residues methionine 1–arginine 31 are Extracellular-facing. Residues asparagine 4 and asparagine 18 are each glycosylated (N-linked (GlcNAc...) asparagine). 2 cysteine pairs are disulfide-bonded: cysteine 21–cysteine 185 and cysteine 104–cysteine 189. A helical membrane pass occupies residues valine 32–valine 52. Over valine 53–asparagine 67 the chain is Cytoplasmic. Residues phenylalanine 68–serine 88 traverse the membrane as a helical segment. Topologically, residues methionine 89–aspartate 111 are extracellular. A helical transmembrane segment spans residues valine 112–alanine 132. Residues valine 133–serine 146 lie on the Cytoplasmic side of the membrane. The chain crosses the membrane as a helical span at residues valine 147 to phenylalanine 167. Residues tyrosine 168–glutamine 195 lie on the Extracellular side of the membrane. A helical membrane pass occupies residues aspartate 196 to tyrosine 216. Over serine 217–threonine 260 the chain is Cytoplasmic. A helical transmembrane segment spans residues leucine 261–valine 281. Residue aspartate 282 is a topological domain, extracellular. A helical transmembrane segment spans residues alanine 283–tyrosine 303. Topologically, residues asparagine 304–glutamate 344 are cytoplasmic.

It belongs to the G-protein coupled receptor 1 family. Specifically expressed in neurons of the olfactory epithelium.

It is found in the cell membrane. Its function is as follows. Olfactory receptor specific for trace amines. Trace amine compounds are enriched in animal body fluids and act on trace amine-associated receptors (TAARs) to elicit both intraspecific and interspecific innate behaviors. Ligand-binding causes a conformation change that triggers signaling via G alpha proteins, possibly G(i)/G(o) G alpha proteins. The chain is Trace amine-associated receptor 8b from Mus musculus (Mouse).